The following is a 307-amino-acid chain: Ubiquinol oxidase subunit 2 (307 aa).

The first 23 residues, 1–23, serve as a signal peptide directing secretion; that stretch reads MKNKLLARVARLGGLSSALLLAG. The N-palmitoyl cysteine moiety is linked to residue Cys-24. Cys-24 carries S-diacylglycerol cysteine lipidation. 2 helical membrane-spanning segments follow: residues 46–66 and 87–107; these read STVAMLIVVIPTILETLLFAW and IEVTIWGVPSLIILFLAVITY.

It belongs to the cytochrome c oxidase subunit 2 family. Heterotetramer of the subunits 1, 2, 3 and 4.

The protein localises to the cell membrane. The polypeptide is Ubiquinol oxidase subunit 2 (cyaB) (Acetobacter aceti).